Here is a 137-residue protein sequence, read N- to C-terminus: Small ribosomal subunit protein bS6 (137 aa).

The interval 96-137 (ITEASPMAKAKDERDTRRSSEERAPRAEAAEEVEESAENTAE) is disordered. Over residues 104 to 124 (KAKDERDTRRSSEERAPRAEA) the composition is skewed to basic and acidic residues. Residues 125 to 137 (AEEVEESAENTAE) show a composition bias toward acidic residues.

This sequence belongs to the bacterial ribosomal protein bS6 family.

Binds together with bS18 to 16S ribosomal RNA. The polypeptide is Small ribosomal subunit protein bS6 (Shewanella halifaxensis (strain HAW-EB4)).